The sequence spans 1139 residues: Retinoblastoma-like protein 2 (1139 aa).

Residues Met1–Ile45 are disordered. Residues Ser8 to Ala17 show a composition bias toward pro residues. A compositionally biased stretch (acidic residues) spans Ser21 to Asp33. Ser413 is subject to Phosphoserine. Residue Thr417 is modified to Phosphothreonine. Residues Thr417 to Val616 form a domain A region. Residues Thr417 to Tyr1024 are pocket; binds E1A. O-linked (GlcNAc) serine glycosylation occurs at Ser420. Residues Pro617–Ser827 form a spacer region. Ser639 is subject to Phosphoserine. Position 642 is a phosphothreonine (Thr642). Positions Gly654–Thr678 are disordered. Ser662, Ser672, and Ser688 each carry phosphoserine. Positions Ile810–Ser827 are enriched in low complexity. Disordered regions lie at residues Ile810–Arg831 and Lys933–Glu999. Residues Asn828–Tyr1024 are domain B. The segment covering Ser941–Glu955 has biased composition (polar residues). Phosphoserine occurs at positions 948, 952, 966, 971, 972, and 973. Residues Asp964–Ser973 show a composition bias toward low complexity. At Thr974 the chain carries Phosphothreonine. A compositionally biased stretch (pro residues) spans Val977 to Pro987. Ser981 and Ser982 each carry phosphoserine. Thr986 is modified (phosphothreonine). 4 positions are modified to phosphoserine: Ser1035, Ser1068, Ser1080, and Ser1112.

The protein belongs to the retinoblastoma protein (RB) family. In terms of assembly, interacts with AATF. Interacts with KMT5B, KMT5C and USP4. Component of the DREAM complex (also named LINC complex) at least composed of E2F4, E2F5, LIN9, LIN37, LIN52, LIN54, MYBL1, MYBL2, RBL1, RBL2, RBBP4, TFDP1 and TFDP2. The complex exists in quiescent cells where it represses cell cycle-dependent genes. It dissociates in S phase when LIN9, LIN37, LIN52 and LIN54 form a subcomplex that binds to MYBL2. Interacts with RINT1. Interacts with PML (isoform PML-1, isoform PML-2, isoform PML-3, isoform PML-4 and isoform PML-5). Interacts with RBBP9. Interacts with CD53. As to quaternary structure, (Microbial infection) Interacts with JC virus small t antigen. During G0 and early G1 phase of the cell cycle, phosphorylated on Ser-639 and on 5 sites within the domain B. Phosphorylation on Ser-672 in G1 leads to its ubiquitin-dependent proteolysis.

It localises to the nucleus. Functionally, key regulator of entry into cell division. Directly involved in heterochromatin formation by maintaining overall chromatin structure and, in particular, that of constitutive heterochromatin by stabilizing histone methylation. Recruits and targets histone methyltransferases KMT5B and KMT5C, leading to epigenetic transcriptional repression. Controls histone H4 'Lys-20' trimethylation. Probably acts as a transcription repressor by recruiting chromatin-modifying enzymes to promoters. Potent inhibitor of E2F-mediated trans-activation, associates preferentially with E2F5. Binds to cyclins A and E. Binds to and may be involved in the transforming capacity of the adenovirus E1A protein. May act as a tumor suppressor. In Homo sapiens (Human), this protein is Retinoblastoma-like protein 2 (RBL2).